A 1594-amino-acid chain; its full sequence is Mucin-like protein (1594 aa).

Topologically, residues 1–1530 (DTTAGPDTTS…YETREDGLEM (1530 aa)) are extracellular. 3 consecutive TSP type-1 domains span residues 141–196 (DGGF…GSCP), 198–253 (DGNF…PPCP), and 255–310 (DGNF…GPCP). 9 disulfide bridges follow: cysteine 153-cysteine 190, cysteine 157-cysteine 195, cysteine 168-cysteine 180, cysteine 210-cysteine 247, cysteine 214-cysteine 252, cysteine 225-cysteine 237, cysteine 267-cysteine 304, cysteine 271-cysteine 309, and cysteine 282-cysteine 294. The NIDO domain maps to 400-566 (LTISDDAFEQ…GVWFFRLEMN (167 aa)). An AMOP domain is found at 568-706 (ILSLAGKKCN…RSCFGYTLRR (139 aa)). The region spanning 706–901 (RRGLIFGDPH…KWQINASQSL (196 aa)) is the VWFD domain. EGF-like domains lie at 1063–1108 (LILL…QYCQ) and 1110–1156 (KIDA…SICE). Disulfide bonds link cysteine 1067/cysteine 1075, cysteine 1069/cysteine 1096, cysteine 1098/cysteine 1107, cysteine 1114/cysteine 1127, cysteine 1121/cysteine 1141, cysteine 1144/cysteine 1155, cysteine 1161/cysteine 1173, cysteine 1169/cysteine 1182, cysteine 1285/cysteine 1296, cysteine 1292/cysteine 1305, cysteine 1307/cysteine 1320, cysteine 1326/cysteine 1341, cysteine 1334/cysteine 1350, and cysteine 1352/cysteine 1363. Residues 1157-1191 (DIDECSDANVSKCDHSCINLPGSYVCDCNQGFSLE) form the EGF-like 3; calcium-binding domain. Positions 1281 to 1321 (DINECTTHRHKCSQICHNLDGSYTCSCQPGFNLSPDQTTCE) constitute an EGF-like 4; calcium-binding domain. The region spanning 1322 to 1364 (DIDECGLINEAHCEGSLEICINTMGSFRCECQDGFHRVNDTCQ) is the EGF-like 5; calcium-binding domain. The chain crosses the membrane as a helical span at residues 1531-1551 (IWLLVGVSVAVAVPLMIVIVI). Topologically, residues 1552–1593 (LYREYRRIAKQRRKTNNFDLRQWSGARERTIYSGFTNSKSAR) are cytoplasmic.

Component of the acid-insoluble and acid-soluble organic matrix of the aragonitic skeleton (at protein level).

It is found in the membrane. This chain is Mucin-like protein, found in Acropora millepora (Staghorn coral).